Reading from the N-terminus, the 309-residue chain is Aspartate carbamoyltransferase catalytic subunit (309 aa).

Arg55 and Thr56 together coordinate carbamoyl phosphate. Lys85 provides a ligand contact to L-aspartate. Residues Arg106, His135, and Gln138 each coordinate carbamoyl phosphate. L-aspartate-binding residues include Arg168 and Arg230. Carbamoyl phosphate is bound by residues Leu268 and Pro269.

Belongs to the aspartate/ornithine carbamoyltransferase superfamily. ATCase family. As to quaternary structure, heterododecamer (2C3:3R2) of six catalytic PyrB chains organized as two trimers (C3), and six regulatory PyrI chains organized as three dimers (R2).

The enzyme catalyses carbamoyl phosphate + L-aspartate = N-carbamoyl-L-aspartate + phosphate + H(+). It participates in pyrimidine metabolism; UMP biosynthesis via de novo pathway; (S)-dihydroorotate from bicarbonate: step 2/3. Its function is as follows. Catalyzes the condensation of carbamoyl phosphate and aspartate to form carbamoyl aspartate and inorganic phosphate, the committed step in the de novo pyrimidine nucleotide biosynthesis pathway. The chain is Aspartate carbamoyltransferase catalytic subunit from Vibrio cholerae serotype O1 (strain ATCC 39315 / El Tor Inaba N16961).